The following is a 236-amino-acid chain: 7-cyano-7-deazaguanine synthase (236 aa).

Position 21 to 31 (21 to 31 (LSGGLDSATVL)) interacts with ATP. Residues cysteine 202, cysteine 212, cysteine 215, and cysteine 218 each coordinate Zn(2+).

This sequence belongs to the QueC family. Zn(2+) serves as cofactor.

It carries out the reaction 7-carboxy-7-deazaguanine + NH4(+) + ATP = 7-cyano-7-deazaguanine + ADP + phosphate + H2O + H(+). Its pathway is purine metabolism; 7-cyano-7-deazaguanine biosynthesis. Catalyzes the ATP-dependent conversion of 7-carboxy-7-deazaguanine (CDG) to 7-cyano-7-deazaguanine (preQ(0)). The polypeptide is 7-cyano-7-deazaguanine synthase (Frankia casuarinae (strain DSM 45818 / CECT 9043 / HFP020203 / CcI3)).